A 128-amino-acid polypeptide reads, in one-letter code: Fluoride-specific ion channel FluC (128 aa).

4 helical membrane passes run Leu2–Leu22, Trp37–Ile57, Ala65–Phe85, and Ala101–Ala121. Positions 77 and 80 each coordinate Na(+).

The protein belongs to the fluoride channel Fluc/FEX (TC 1.A.43) family.

The protein resides in the cell inner membrane. The catalysed reaction is fluoride(in) = fluoride(out). Its activity is regulated as follows. Na(+) is not transported, but it plays an essential structural role and its presence is essential for fluoride channel function. Functionally, fluoride-specific ion channel. Important for reducing fluoride concentration in the cell, thus reducing its toxicity. This is Fluoride-specific ion channel FluC from Bordetella bronchiseptica (strain ATCC BAA-588 / NCTC 13252 / RB50) (Alcaligenes bronchisepticus).